We begin with the raw amino-acid sequence, 9702 residues long: Nonribosomal peptide synthetase ungA (9702 aa).

Residues 248–647 are adenylation 1; the sequence is EQAQLRPHAP…ARKDTQVKIR (400 aa). The region spanning 775-852 is the Carrier 1 domain; the sequence is APQTEMEYRL…MARAAQEKQT (78 aa). An O-(pantetheine 4'-phosphoryl)serine modification is found at Ser-812. The interval 891–1288 is condensation 1; it reads DILPCTPLQE…EAVLRHVCSQ (398 aa). Residues 1330-1730 form an adenylation 2 region; sequence QRTQQQPDAP…GRKDTQVKIR (401 aa). A Carrier 2 domain is found at 1857 to 1933; the sequence is LPQSPMEKSL…RLARREIQTD (77 aa). Residue Ser-1894 is modified to O-(pantetheine 4'-phosphoryl)serine. The interval 1946–2374 is epimerization 1; that stretch reads PFALSPIQQF…ERALEGTAVQ (429 aa). The segment at 2414–2842 is condensation 2; that stretch reads EDIYPCSPLQ…LDTAILSPQD (429 aa). The segment at 2868-3267 is adenylation 3; that stretch reads QVERQPDALA…GRKDTQVKIR (400 aa). One can recognise a Carrier 3 domain in the interval 3397–3473; sequence APTTEMERHL…EMSQVAKLGS (77 aa). Ser-3434 is modified (O-(pantetheine 4'-phosphoryl)serine). Residues 3512–3920 are condensation 3; the sequence is EDVFPCTPLQ…LLCDASHHQS (409 aa). The tract at residues 3957-4361 is adenylation 4; it reads KQTQRRSAAQ…GRKDAQVKIR (405 aa). Residues 4491 to 4568 enclose the Carrier 4 domain; that stretch reads PPTTDLERQI…LALSVSAAVD (78 aa). The residue at position 4528 (Ser-4528) is an O-(pantetheine 4'-phosphoryl)serine. Positions 4583 to 5013 are epimerization 2; it reads ALSPIQQMFA…QAAAQALPLL (431 aa). The interval 5049–5474 is condensation 4; it reads VEDIYPCSPL…ANIISHQDLE (426 aa). Residues 5496–5899 form an adenylation 5 region; it reads MQQAESQPGA…GRKDNQVKIH (404 aa). The 78-residue stretch at 6033–6110 folds into the Carrier 5 domain; sequence TASSPEELEL…LVSHAQGNTA (78 aa). Ser-6070 bears the O-(pantetheine 4'-phosphoryl)serine mark. Residues 6127-6551 are epimerization 3; that stretch reads ELSPIQQLFF…CKSSLEAAAA (425 aa). Positions 6593 to 6935 are condensation 5; that stretch reads VEDIYPCAPI…TGISVQGGAA (343 aa). The adenylation 6 stretch occupies residues 7047 to 7447; the sequence is KRPDAPAIDA…GRRDNQVKVR (401 aa). Residues 7575–7655 enclose the Carrier 6 domain; it reads GPQTEVERLL…RSARTVQGHV (81 aa). Ser-7613 carries the O-(pantetheine 4'-phosphoryl)serine modification. Positions 7670 to 8106 are epimerization 4; it reads DLAPVQQMFA…LVTASELLMQ (437 aa). A condensation 6 region spans residues 8144 to 8588; that stretch reads VEDIYPCSPI…EVDLSTDHDQ (445 aa). Residues 8612–9025 are adenylation 7; it reads NTVQKQPHST…GRKDSQVKIR (414 aa). The 79-residue stretch at 9158–9236 folds into the Carrier 7 domain; the sequence is SPTAPMERRL…LALLVREGDA (79 aa). At Ser-9196 the chain carries O-(pantetheine 4'-phosphoryl)serine. The interval 9282 to 9629 is condensation 7; sequence DVYPTTDLQN…DNLEHDPGTA (348 aa).

The protein belongs to the NRP synthetase family.

Its pathway is secondary metabolite biosynthesis. Its function is as follows. Nonribosomal peptide synthetase; part of the gene cluster that mediates the biosynthesis of the unguisins, gamma-aminobutyric acid (GABA)-containing fungal cyclic heptapeptides with the amino acid sequence cyclo-(D-Ala1-D-Val2-L-Phe3-D-Val4-D-Ala5-D-Trp6-GABA7) for unguisin A and cyclo-(D-Ala1-D-Val2-L-Leu3-D-Val4-D-Ala5-D-Trp6-GABA7) for unguisin B. UngA is the main enzyme within the cluster which condenses the 7 residues using its respective 7 modules. The terminal condensation domain (Ct) is involved in cyclization with D-alanine and thereby releasing of unguisins A and B. The alanine racemase ungC provides D-alanine, which is then accepted by the first adenylation domain of ungA. Finally, the hydrolase ungD catalyzes the hydrolysis between the D-tryptophan and GABA residues of unguisins A and B to produce the corresponding linear peptides. This chain is Nonribosomal peptide synthetase ungA, found in Aspergillus violaceofuscus (strain CBS 115571).